The primary structure comprises 454 residues: Glutaredoxin domain-containing cysteine-rich protein CG31559 (454 aa).

Disordered stretches follow at residues 30–88 (ETAD…QRQK) and 217–239 (RSAR…GSDS). Residues 33 to 45 (DSGNGSDLESTGL) show a composition bias toward polar residues. Residues 58–69 (SSLGSDSMHGSS) are compositionally biased toward low complexity. Polar residues predominate over residues 70–84 (TEYVRQSASQPSGQR). Residues 217–227 (RSARSGDEADH) show a composition bias toward basic and acidic residues. A Glutaredoxin domain is found at 295–400 (NAKNFKEKDL…QLLKPYKSMA (106 aa)).

This sequence belongs to the GRXCR1 family.

The sequence is that of Glutaredoxin domain-containing cysteine-rich protein CG31559 from Drosophila melanogaster (Fruit fly).